The following is a 272-amino-acid chain: Diaminopimelate epimerase (272 aa).

The substrate site is built by asparagine 11 and asparagine 63. The active-site Proton donor is the cysteine 72. Residues 73–74, asparagine 190, and 208–209 contribute to the substrate site; these read GN and ER. Cysteine 217 serves as the catalytic Proton acceptor. 218–219 lines the substrate pocket; that stretch reads GT.

This sequence belongs to the diaminopimelate epimerase family. Homodimer.

Its subcellular location is the cytoplasm. It carries out the reaction (2S,6S)-2,6-diaminopimelate = meso-2,6-diaminopimelate. The protein operates within amino-acid biosynthesis; L-lysine biosynthesis via DAP pathway; DL-2,6-diaminopimelate from LL-2,6-diaminopimelate: step 1/1. Catalyzes the stereoinversion of LL-2,6-diaminopimelate (L,L-DAP) to meso-diaminopimelate (meso-DAP), a precursor of L-lysine and an essential component of the bacterial peptidoglycan. The sequence is that of Diaminopimelate epimerase from Clostridium perfringens (strain 13 / Type A).